A 102-amino-acid polypeptide reads, in one-letter code: MASKKAAMVMMAMIVIMAMLVDTSVAIDLCGMSQDELNECKPAVSKENPTSPSQPCCTALQHADFACLCGYKNSPWLGSFGVDPELASALPKQCGLANAPTC.

The signal sequence occupies residues 1-25 (MASKKAAMVMMAMIVIMAMLVDTSV). 4 cysteine pairs are disulfide-bonded: C30-C67, C40-C56, C57-C94, and C69-C102. Q34 contributes to the a 1-acyl-sn-glycero-3-phosphocholine binding site. E36 contributes to the Zn(2+) binding site. Residue N38 participates in a 1-acyl-sn-glycero-3-phosphocholine binding. Residue H62 participates in Zn(2+) binding.

It belongs to the A9/FIL1 family. As to quaternary structure, self-interacts and binds to AZI1. Does not interact with PDLP1. The cofactor is Zn(2+).

Its subcellular location is the secreted. It localises to the extracellular space. The protein localises to the apoplast. The protein resides in the endoplasmic reticulum. It is found in the cell junction. Its subcellular location is the plasmodesma. Functionally, putative lipid transfer protein required for systemic acquired resistance (SAR) long distance signaling. May interact with a lipid-derived molecule to promote long distance signaling associated with SAR. Together with AZI1, required for glycerol-3-phosphate- (G3P) and azelaic acid- (AA) induced systemic acquired resistance (SAR). Component of plant systemic immunity involved in priming defenses in a AA-dependent manner, by modulating production and/or translocation of a mobile signal(s) during SAR. Is able to bind with high affinity monoacylated phospholipids, mainly lysophosphatidylcholines. The sequence is that of Putative lipid-transfer protein DIR1 (DIR1) from Arabidopsis thaliana (Mouse-ear cress).